The primary structure comprises 350 residues: Probable poly-beta-1,6-N-acetyl-D-glucosamine export protein (350 aa).

10 consecutive transmembrane segments (helical) span residues 8-28 (LVYLRAIICAIIIITHLLTQI), 40-60 (LVLQFYIRNIVIFGTPCFIIL), 83-103 (YILIPYILMGLFYSYSESLLT), 119-139 (QWYGYFIVVIMQFFILSYIIF), 146-166 (FNSKILLLLSFILQQSFLYYF), 182-202 (LSENTIIFGWIFYFFLGAYMG), 216-236 (LVIMIVLAVATYFVFIALANG), 254-274 (IMFIVILGICTHFKTMLFNTI), 276-296 (MISAFSFFIYLLHPIILDSLF), and 308-328 (VFLAISLLFILGLCIGVGMIL).

Belongs to the acyltransferase 3 family.

The protein resides in the cell membrane. Presumably involved in the export of the biofilm adhesin polysaccharide poly-beta-1,6-N-acetyl-D-glucosamine (PNAG, also referred to as PIA) across the cell membrane. This chain is Probable poly-beta-1,6-N-acetyl-D-glucosamine export protein (icaC), found in Staphylococcus aureus (strain NCTC 8325 / PS 47).